The primary structure comprises 626 residues: tRNA uridine 5-carboxymethylaminomethyl modification enzyme MnmG (626 aa).

FAD is bound at residue 14–19 (GAGHAG). NAD(+) is bound at residue 273–287 (GPRYCPSIEDKVVRF).

This sequence belongs to the MnmG family. In terms of assembly, homodimer. Heterotetramer of two MnmE and two MnmG subunits. FAD is required as a cofactor.

The protein resides in the cytoplasm. Functionally, NAD-binding protein involved in the addition of a carboxymethylaminomethyl (cmnm) group at the wobble position (U34) of certain tRNAs, forming tRNA-cmnm(5)s(2)U34. The polypeptide is tRNA uridine 5-carboxymethylaminomethyl modification enzyme MnmG (Caldicellulosiruptor saccharolyticus (strain ATCC 43494 / DSM 8903 / Tp8T 6331)).